The following is a 352-amino-acid chain: Cellular tumor antigen p53 (352 aa).

The transcription activation (acidic) stretch occupies residues 1-48 (MDPVPDLPESQGSFQELWETVSYPPLETLSLPTVNEPTGSWVATGDMF). A DNA-binding region spans residues 87 to 273 (DYPGSYELEL…KTEEESRQKT (187 aa)). The Zn(2+) site is built by C161, H164, C220, and C224. Residues 254–261 (RICACPGR) are interaction with DNA. Positions 262–271 (DRKTEEESRQ) are enriched in basic and acidic residues. A disordered region spans residues 262-303 (DRKTEEESRQKTQPKKRKVTPNTSSSKRKKSHSSGEEEDNRE). The short motif at 276-291 (KKRKVTPNTSSSKRKK) is the Bipartite nuclear localization signal element. The segment at 302–331 (REVFHFEVYGRERYEFLKKINDGLELLEKE) is oligomerization. The Nuclear export signal motif lies at 316–327 (EFLKKINDGLEL). The segment at 330–352 (KESKSKNKDSGMVPSSGKKLKSN) is disordered. A basic (repression of DNA-binding) region spans residues 334-350 (SKNKDSGMVPSSGKKLK). S351 carries the phosphoserine modification.

It belongs to the p53 family. In terms of assembly, binds DNA as a homotetramer. Zn(2+) is required as a cofactor.

The protein localises to the cytoplasm. It is found in the nucleus. Multifunctional transcription factor that induces cell cycle arrest, DNA repair or apoptosis upon binding to its target DNA sequence. Acts as a tumor suppressor in many tumor types; induces growth arrest or apoptosis depending on the physiological circumstances and cell type. Negatively regulates cell division by controlling expression of a set of genes required for this process. One of the activated genes is an inhibitor of cyclin-dependent kinases. Apoptosis induction seems to be mediated either by stimulation of BAX and FAS antigen expression, or by repression of Bcl-2 expression. This chain is Cellular tumor antigen p53 (tp53), found in Oryzias latipes (Japanese rice fish).